Here is a 437-residue protein sequence, read N- to C-terminus: Probable N-acetylmuramidase (437 aa).

An N-terminal signal peptide occupies residues 1 to 57 (MPVSRVKVKNRHLKKKTKKPLAFYKPTTKFVGAVLIAGTLTTTHELLLQQTSPMVQA). Disordered regions lie at residues 217–244 (SSAGNTNSGGSTTTNTNNNSGTNSSSTT), 291–319 (SSTNSGGSNNSASTTPTTSVTPAKPASQT), and 367–392 (ATSNPSTGSGSTATNNSNSTSSNSNA). Residues 243-286 (TTYTVKSGDTLWGISQRYGISVAQIQSANNLKSTIIYIGQKLLL) form the LysM 1 domain. Positions 291–317 (SSTNSGGSNNSASTTPTTSVTPAKPAS) are enriched in low complexity. The 44-residue stretch at 319–362 (TSVKVKSGDTLWALSVKYKTSIAQLKSWNHLSSDTIYIGQNLIV) folds into the LysM 2 domain. The LysM 3 domain occupies 393 to 436 (SIHKVVKGDTLWGLSQKSGSPIASIKAWNHLSSDTILIGQYLRI).

It belongs to the glycosyl hydrolase 73 family.

It localises to the secreted. It catalyses the reaction Hydrolysis of (1-&gt;4)-beta-linkages between N-acetylmuramic acid and N-acetyl-D-glucosamine residues in a peptidoglycan and between N-acetyl-D-glucosamine residues in chitodextrins.. Functionally, hydrolyzes the cell wall of L.lactis and M.lysodeikticus. Required for cell separation during growth. The polypeptide is Probable N-acetylmuramidase (acmA) (Lactococcus lactis subsp. cremoris (Streptococcus cremoris)).